A 711-amino-acid chain; its full sequence is Long-chain-fatty-acid--CoA ligase 4 (711 aa).

A helical; Signal-anchor for type III membrane protein transmembrane segment spans residues 8 to 28 (LTIVLLPVHLLITIYSALIFI). Residues 29-711 (PWYFLTNAKK…KDIERMYGGK (683 aa)) are Cytoplasmic-facing. S447 carries the phosphoserine modification.

This sequence belongs to the ATP-dependent AMP-binding enzyme family. Mg(2+) serves as cofactor.

The protein localises to the mitochondrion outer membrane. It localises to the peroxisome membrane. The protein resides in the microsome membrane. Its subcellular location is the endoplasmic reticulum membrane. It is found in the cell membrane. It carries out the reaction a long-chain fatty acid + ATP + CoA = a long-chain fatty acyl-CoA + AMP + diphosphate. It catalyses the reaction (5Z,8Z,11Z,14Z)-eicosatetraenoate + ATP + CoA = (5Z,8Z,11Z,14Z)-eicosatetraenoyl-CoA + AMP + diphosphate. The catalysed reaction is 15-hydroxy-(5Z,8Z,11Z,13E)-eicosatetraenoate + ATP + CoA = 15-hydroxy-(5Z,8Z,11Z,13E)-eicosatetraenoyl-CoA + AMP + diphosphate. The enzyme catalyses 12-hydroxy-(5Z,8Z,10E,14Z)-eicosatetraenoate + ATP + CoA = 12-hydroxy-(5Z,8Z,10E,14Z)-eicosatetraenoyl-CoA + AMP + diphosphate. It carries out the reaction 5-hydroxy-(6E,8Z,11Z,14Z)-eicosatetraenoate + ATP + CoA = 5-hydroxy-(6E,8Z,11Z,14Z)-eicosatetraenoyl-CoA + AMP + diphosphate. It catalyses the reaction 5,6-epoxy-(8Z,11Z,14Z)-eicosatrienoate + ATP + CoA = 5,6-epoxy-(8Z,11Z,14Z)-eicosatrienoyl-CoA + AMP + diphosphate. The catalysed reaction is 14,15-epoxy-(5Z,8Z,11Z)-eicosatrienoate + ATP + CoA = 14,15-epoxy-(5Z,8Z,11Z)-eicosatrienoyl-CoA + AMP + diphosphate. The enzyme catalyses 11,12-epoxy-(5Z,8Z,14Z)-eicosatrienoate + ATP + CoA = 11,12-epoxy-(5Z,8Z,14Z)-eicosatrienoyl-CoA + AMP + diphosphate. It carries out the reaction 8,9-epoxy-(5Z,11Z,14Z)-eicosatrienoate + ATP + CoA = 8,9-epoxy-(5Z,11Z,14Z)-eicosatrienoyl-CoA + AMP + diphosphate. It catalyses the reaction hexadecanoate + ATP + CoA = hexadecanoyl-CoA + AMP + diphosphate. The catalysed reaction is (E)-hexadec-2-enoate + ATP + CoA = (2E)-hexadecenoyl-CoA + AMP + diphosphate. Both triacsin C and rosiglitazone inhibit arachidonoyl-CoA ligase activity. Catalyzes the conversion of long-chain fatty acids to their active form acyl-CoA for both synthesis of cellular lipids, and degradation via beta-oxidation. Preferentially activates arachidonate and eicosapentaenoate as substrates. Preferentially activates 8,9-EET &gt; 14,15-EET &gt; 5,6-EET &gt; 11,12-EET. Modulates glucose-stimulated insulin secretion by regulating the levels of unesterified EETs. Modulates prostaglandin E2 secretion. This Rattus norvegicus (Rat) protein is Long-chain-fatty-acid--CoA ligase 4 (Acsl4).